The primary structure comprises 257 residues: 3-deoxy-manno-octulosonate cytidylyltransferase (257 aa).

The protein belongs to the KdsB family.

Its subcellular location is the cytoplasm. The catalysed reaction is 3-deoxy-alpha-D-manno-oct-2-ulosonate + CTP = CMP-3-deoxy-beta-D-manno-octulosonate + diphosphate. Its pathway is nucleotide-sugar biosynthesis; CMP-3-deoxy-D-manno-octulosonate biosynthesis; CMP-3-deoxy-D-manno-octulosonate from 3-deoxy-D-manno-octulosonate and CTP: step 1/1. The protein operates within bacterial outer membrane biogenesis; lipopolysaccharide biosynthesis. Its function is as follows. Activates KDO (a required 8-carbon sugar) for incorporation into bacterial lipopolysaccharide in Gram-negative bacteria. This Halorhodospira halophila (strain DSM 244 / SL1) (Ectothiorhodospira halophila (strain DSM 244 / SL1)) protein is 3-deoxy-manno-octulosonate cytidylyltransferase.